A 168-amino-acid chain; its full sequence is Protein C2-DOMAIN ABA-RELATED 1 (168 aa).

An N-acetylmethionine modification is found at M1. Positions 1-104 constitute a C2 domain; the sequence is MENLVGLLRI…EAIKFAHQLG (104 aa). The Ca(2+) site is built by R21, D22, D27, D73, Y74, D75, and D81.

It belongs to the plant CAR protein family. As to quaternary structure, dimers and oligomers. Binds to PYR/PYL/RCAR abscisic acid intracellular receptors in an ABA-independent manner, both at the plasma membrane and in the nucleus. Interacts directly with PYR1, PYL1, PYL4, PYL6 and PYL8. Binds phospholipids in a Ca(2+)-dependent manner. Requires Ca(2+) as cofactor. In terms of tissue distribution, expressed in roots.

The protein resides in the cell membrane. The protein localises to the nucleus. In terms of biological role, stimulates the GTPase/ATPase activities of Obg-like ATPases. Mediates the transient calcium-dependent interaction of PYR/PYL/RCAR abscisic acid (ABA) receptors with the plasma membrane and thus regulates ABA sensitivity. Binds liposomes in the absence of exogenous Ca(2+), but this activity is enhanced in the presence of Ca(2+) and generates membrane curvature. The polypeptide is Protein C2-DOMAIN ABA-RELATED 1 (Arabidopsis thaliana (Mouse-ear cress)).